We begin with the raw amino-acid sequence, 118 residues long: MTERTGYRATTKFLIASPTKVRPVANVVKNKPYPEAMAILENMPQKGAVLISQTMKSAASNALYKNKQLDEDMLFVKEIMIDEGPRLKRIWCRGKGRADILLKRMCHITVVVDERAGE.

It belongs to the universal ribosomal protein uL22 family. In terms of assembly, part of the 50S ribosomal subunit.

In terms of biological role, this protein binds specifically to 23S rRNA; its binding is stimulated by other ribosomal proteins, e.g. L4, L17, and L20. It is important during the early stages of 50S assembly. It makes multiple contacts with different domains of the 23S rRNA in the assembled 50S subunit and ribosome. Functionally, the globular domain of the protein is located near the polypeptide exit tunnel on the outside of the subunit, while an extended beta-hairpin is found that lines the wall of the exit tunnel in the center of the 70S ribosome. The protein is Large ribosomal subunit protein uL22 of Treponema denticola (strain ATCC 35405 / DSM 14222 / CIP 103919 / JCM 8153 / KCTC 15104).